Consider the following 249-residue polypeptide: Purine nucleoside phosphorylase ML0918 (249 aa).

His72, Cys109, and His126 together coordinate Zn(2+).

This sequence belongs to the purine nucleoside phosphorylase YfiH/LACC1 family. As to quaternary structure, homodimer. Requires Cu(2+) as cofactor. Zn(2+) is required as a cofactor.

The enzyme catalyses adenosine + phosphate = alpha-D-ribose 1-phosphate + adenine. It carries out the reaction S-methyl-5'-thioadenosine + phosphate = 5-(methylsulfanyl)-alpha-D-ribose 1-phosphate + adenine. The catalysed reaction is inosine + phosphate = alpha-D-ribose 1-phosphate + hypoxanthine. It catalyses the reaction adenosine + H2O + H(+) = inosine + NH4(+). Functionally, purine nucleoside enzyme that catalyzes the phosphorolysis of adenosine and inosine nucleosides, yielding D-ribose 1-phosphate and the respective free bases, adenine and hypoxanthine. Also catalyzes the phosphorolysis of S-methyl-5'-thioadenosine into adenine and S-methyl-5-thio-alpha-D-ribose 1-phosphate. Also has adenosine deaminase activity. This is Purine nucleoside phosphorylase ML0918 from Mycobacterium leprae (strain TN).